We begin with the raw amino-acid sequence, 308 residues long: Aspartate carbamoyltransferase catalytic subunit (308 aa).

2 residues coordinate carbamoyl phosphate: Arg57 and Thr58. Lys86 is a binding site for L-aspartate. Arg107, His135, and Gln138 together coordinate carbamoyl phosphate. Positions 167 and 228 each coordinate L-aspartate. Leu267 and Pro268 together coordinate carbamoyl phosphate.

The protein belongs to the aspartate/ornithine carbamoyltransferase superfamily. ATCase family. As to quaternary structure, heterooligomer of catalytic and regulatory chains.

The catalysed reaction is carbamoyl phosphate + L-aspartate = N-carbamoyl-L-aspartate + phosphate + H(+). Its pathway is pyrimidine metabolism; UMP biosynthesis via de novo pathway; (S)-dihydroorotate from bicarbonate: step 2/3. Its function is as follows. Catalyzes the condensation of carbamoyl phosphate and aspartate to form carbamoyl aspartate and inorganic phosphate, the committed step in the de novo pyrimidine nucleotide biosynthesis pathway. The sequence is that of Aspartate carbamoyltransferase catalytic subunit from Methanococcoides burtonii (strain DSM 6242 / NBRC 107633 / OCM 468 / ACE-M).